The chain runs to 216 residues: N-(5'-phosphoribosyl)anthranilate isomerase (216 aa).

This sequence belongs to the TrpF family.

It catalyses the reaction N-(5-phospho-beta-D-ribosyl)anthranilate = 1-(2-carboxyphenylamino)-1-deoxy-D-ribulose 5-phosphate. It participates in amino-acid biosynthesis; L-tryptophan biosynthesis; L-tryptophan from chorismate: step 3/5. The polypeptide is N-(5'-phosphoribosyl)anthranilate isomerase (Methanopyrus kandleri (strain AV19 / DSM 6324 / JCM 9639 / NBRC 100938)).